The chain runs to 238 residues: Probable septum site-determining protein MinC (238 aa).

This sequence belongs to the MinC family. In terms of assembly, interacts with MinD and FtsZ.

Its function is as follows. Cell division inhibitor that blocks the formation of polar Z ring septums. Rapidly oscillates between the poles of the cell to destabilize FtsZ filaments that have formed before they mature into polar Z rings. Prevents FtsZ polymerization. This is Probable septum site-determining protein MinC from Aeromonas salmonicida (strain A449).